The chain runs to 1217 residues: Splicing factor 3B subunit 3 (1217 aa).

2 interaction with PHF5A, SF3B1 and SF3B5 regions span residues 105-119 (ETFGKSGCRRIVPGQ) and 145-168 (NRDAAARLTISSPLEAHKANTLVY). The residue at position 156 (Ser-156) is a Phosphoserine. Interaction with SF3B1 and SF3B5 regions lie at residues 193-231 (DNDPTGEAAANTQQTLTFYELDLGLNHVVRKYSEPLEEH) and 786-804 (RKFVIHPESNNLIIIETDH). The interval 1028-1049 (TYPRWVTTASLLDYDTVAGADK) is interaction with SF3B1. Positions 1100–1123 (TVLSLQKTTLIPGGSESLVYTTLS) are interaction with SF3B5. The residue at position 1200 (Thr-1200) is a Phosphothreonine.

This sequence belongs to the RSE1 family. In terms of assembly, component of the 17S U2 SnRNP complex, a ribonucleoprotein complex that contains small nuclear RNA (snRNA) U2 and a number of specific proteins. Part of the SF3B subcomplex of the 17S U2 SnRNP complex. SF3B associates with the splicing subcomplex SF3A and a 12S RNA unit to form the U2 small nuclear ribonucleoproteins complex (U2 snRNP). Within the SF3B subcomplex, interacts directly with SF3B1 (via HEAT domain), SF3B5 and PHF5A. Identified in the spliceosome A complex; remains associated with the spliceosome throughout the splicing process. Component of the spliceosome B complex. Identified in the spliceosome C complex. Identified in the spliceosome E complex. Component of the minor (U12-type spliceosome) spliceosome. Within this complex, interacts with SCNM1. Associates with the STAGA transcription coactivator-HAT complex. Interacts with SUPT3H. Interacts with TAF3.

Its subcellular location is the nucleus. In terms of biological role, component of the 17S U2 SnRNP complex of the spliceosome, a large ribonucleoprotein complex that removes introns from transcribed pre-mRNAs. The 17S U2 SnRNP complex (1) directly participates in early spliceosome assembly and (2) mediates recognition of the intron branch site during pre-mRNA splicing by promoting the selection of the pre-mRNA branch-site adenosine, the nucleophile for the first step of splicing. Within the 17S U2 SnRNP complex, SF3B3 is part of the SF3B subcomplex, which is required for 'A' complex assembly formed by the stable binding of U2 snRNP to the branchpoint sequence in pre-mRNA. Sequence independent binding of SF3A and SF3B subcomplexes upstream of the branch site is essential, it may anchor U2 snRNP to the pre-mRNA. May also be involved in the assembly of the 'E' complex. Also acts as a component of the minor spliceosome, which is involved in the splicing of U12-type introns in pre-mRNAs. The chain is Splicing factor 3B subunit 3 (Sf3b3) from Mus musculus (Mouse).